The primary structure comprises 811 residues: Zinc finger protein 839 (811 aa).

The segment at 197–222 (FKCQTCEKSYIGKGGLARHFKLNPGH) adopts a C2H2-type zinc-finger fold. 3 disordered regions span residues 329 to 349 (QRRA…RASP), 455 to 555 (PDNL…NGSV), and 612 to 654 (ALEH…AEAG). Basic and acidic residues predominate over residues 476-485 (SSEKREREAA). Polar residues predominate over residues 501-510 (SNDTTESLAA).

This chain is Zinc finger protein 839 (ZNF839), found in Homo sapiens (Human).